A 263-amino-acid polypeptide reads, in one-letter code: Hydroxyacylglutathione hydrolase (263 aa).

Residues H56, H58, D60, H61, H115, D135, and H175 each coordinate Zn(2+).

This sequence belongs to the metallo-beta-lactamase superfamily. Glyoxalase II family. As to quaternary structure, monomer. Requires Zn(2+) as cofactor.

The catalysed reaction is an S-(2-hydroxyacyl)glutathione + H2O = a 2-hydroxy carboxylate + glutathione + H(+). It functions in the pathway secondary metabolite metabolism; methylglyoxal degradation; (R)-lactate from methylglyoxal: step 2/2. Its function is as follows. Thiolesterase that catalyzes the hydrolysis of S-D-lactoyl-glutathione to form glutathione and D-lactic acid. The sequence is that of Hydroxyacylglutathione hydrolase from Polaromonas sp. (strain JS666 / ATCC BAA-500).